A 433-amino-acid polypeptide reads, in one-letter code: Trigger factor (433 aa).

Residues 163 to 248 enclose the PPIase FKBP-type domain; it reads GDTVNIDFSG…VNEIKFKEVP (86 aa).

Belongs to the FKBP-type PPIase family. Tig subfamily.

The protein resides in the cytoplasm. It carries out the reaction [protein]-peptidylproline (omega=180) = [protein]-peptidylproline (omega=0). In terms of biological role, involved in protein export. Acts as a chaperone by maintaining the newly synthesized protein in an open conformation. Functions as a peptidyl-prolyl cis-trans isomerase. The chain is Trigger factor from Staphylococcus aureus (strain COL).